The primary structure comprises 119 residues: Large ribosomal subunit protein bL20c (119 aa).

This sequence belongs to the bacterial ribosomal protein bL20 family.

The protein resides in the plastid. Its subcellular location is the chloroplast. Its function is as follows. Binds directly to 23S ribosomal RNA and is necessary for the in vitro assembly process of the 50S ribosomal subunit. It is not involved in the protein synthesizing functions of that subunit. The chain is Large ribosomal subunit protein bL20c from Brachypodium distachyon (Purple false brome).